A 142-amino-acid chain; its full sequence is MSSSSHKRIIGIDFGTKRIGVALSDPLRMFAQPLGTFDMEGLVRVLSRVRDDEGIELVVVGYPMSDKGEENRMTGVIDRFVAELRESFPGTLIETFDEHRSSRTAMKILAASGSSRKKRNEKGRLDTAAACLILQGYLDSHS.

Belongs to the YqgF nuclease family.

It localises to the cytoplasm. Functionally, could be a nuclease involved in processing of the 5'-end of pre-16S rRNA. The protein is Putative pre-16S rRNA nuclease of Chlorobaculum tepidum (strain ATCC 49652 / DSM 12025 / NBRC 103806 / TLS) (Chlorobium tepidum).